The chain runs to 277 residues: Diaminopimelate epimerase (277 aa).

Substrate is bound by residues asparagine 17, glutamine 50, and asparagine 68. Cysteine 77 serves as the catalytic Proton donor. Substrate contacts are provided by residues 78 to 79 (GN), asparagine 162, asparagine 195, and 213 to 214 (ER). Residue cysteine 222 is the Proton acceptor of the active site. 223-224 (GT) contributes to the substrate binding site.

Belongs to the diaminopimelate epimerase family. Homodimer.

It localises to the cytoplasm. The catalysed reaction is (2S,6S)-2,6-diaminopimelate = meso-2,6-diaminopimelate. It functions in the pathway amino-acid biosynthesis; L-lysine biosynthesis via DAP pathway; DL-2,6-diaminopimelate from LL-2,6-diaminopimelate: step 1/1. Catalyzes the stereoinversion of LL-2,6-diaminopimelate (L,L-DAP) to meso-diaminopimelate (meso-DAP), a precursor of L-lysine and an essential component of the bacterial peptidoglycan. The polypeptide is Diaminopimelate epimerase (Phenylobacterium zucineum (strain HLK1)).